Here is a 322-residue protein sequence, read N- to C-terminus: Sideroflexin fsf1 (322 aa).

Helical transmembrane passes span 143 to 163 (SYIY…KIVP), 175 to 195 (VLGR…NVFL), 229 to 249 (TALS…LVLM), and 269 to 289 (LGLI…VFPA).

Belongs to the sideroflexin family.

The protein localises to the mitochondrion membrane. Functionally, mitochondrial amino-acid transporter that mediates transport of serine into mitochondria. The protein is Sideroflexin fsf1 of Schizosaccharomyces pombe (strain 972 / ATCC 24843) (Fission yeast).